Reading from the N-terminus, the 92-residue chain is Small ribosomal subunit protein uS19 (92 aa).

It belongs to the universal ribosomal protein uS19 family.

In terms of biological role, protein S19 forms a complex with S13 that binds strongly to the 16S ribosomal RNA. The protein is Small ribosomal subunit protein uS19 of Borrelia recurrentis (strain A1).